Reading from the N-terminus, the 93-residue chain is Aspartyl/glutamyl-tRNA(Asn/Gln) amidotransferase subunit C (93 aa).

The protein belongs to the GatC family. In terms of assembly, heterotrimer of A, B and C subunits.

The catalysed reaction is L-glutamyl-tRNA(Gln) + L-glutamine + ATP + H2O = L-glutaminyl-tRNA(Gln) + L-glutamate + ADP + phosphate + H(+). The enzyme catalyses L-aspartyl-tRNA(Asn) + L-glutamine + ATP + H2O = L-asparaginyl-tRNA(Asn) + L-glutamate + ADP + phosphate + 2 H(+). Functionally, allows the formation of correctly charged Asn-tRNA(Asn) or Gln-tRNA(Gln) through the transamidation of misacylated Asp-tRNA(Asn) or Glu-tRNA(Gln) in organisms which lack either or both of asparaginyl-tRNA or glutaminyl-tRNA synthetases. The reaction takes place in the presence of glutamine and ATP through an activated phospho-Asp-tRNA(Asn) or phospho-Glu-tRNA(Gln). This is Aspartyl/glutamyl-tRNA(Asn/Gln) amidotransferase subunit C from Methanococcoides burtonii (strain DSM 6242 / NBRC 107633 / OCM 468 / ACE-M).